The following is a 55-amino-acid chain: uncharacterized protein (55 aa).

This is an uncharacterized protein from Rickettsia prowazekii (strain Madrid E).